The sequence spans 826 residues: Hyaluronate lyase HylA (826 aa).

The segment at residues 1-36 is a signal peptide (tat-type signal); sequence MFDIPYQVPSRRTFLSLSALSAIAIAASPEMPDAFA. Catalysis depends on residues H276, Y285, and R339. The disordered stretch occupies residues 800–826; the sequence is LSPALPKPTKPSLRASSYPLGLPHTSS.

This sequence belongs to the polysaccharide lyase 8 family. In terms of processing, predicted to be exported by the Tat system. The position of the signal peptide cleavage has not been experimentally proven.

It localises to the secreted. It carries out the reaction [hyaluronan](n) = n 3-(4-deoxy-beta-D-gluc-4-enuronosyl)-N-acetyl-D-glucosamine + H2O. In terms of biological role, degrades hyaluronic acid (HA) into large-sized HA oligosaccharides, including tetrasaccharide HA (HA-4), hexasaccharide HA (HA-6) and higher molecular weight HA, and to a lesser extent into HA disaccharides (HA-2). Involved in the pathogenesis of acne. HA degradation products induce secretion of proinflammatory cytokines (IL-6, IL-8 and TNF-alpha) from human HaCaT keratinocyte cell line and from mouse bone marrow derived macrophages (BMDMs). Produced HA fragments also direct robust TLR2-dependent inflammation in the mouse model of acne. The protein is Hyaluronate lyase HylA of Cutibacterium acnes (Propionibacterium acnes).